The following is a 249-amino-acid chain: NAD(P)H-hydrate epimerase (249 aa).

The YjeF N-terminal domain maps to 11 to 233; sequence AQQIDVELMS…ELGKKHELNI (223 aa). 62 to 66 contacts (6S)-NADPHX; the sequence is NQGGD. K(+)-binding residues include Gln-63 and Asp-127. (6S)-NADPHX is bound by residues 131–137 and Asp-162; that span reads GFSFQPP. Residue Ser-165 coordinates K(+).

Belongs to the NnrE/AIBP family. It depends on K(+) as a cofactor.

The protein localises to the cytoplasm. The protein resides in the mitochondrion. It carries out the reaction (6R)-NADHX = (6S)-NADHX. It catalyses the reaction (6R)-NADPHX = (6S)-NADPHX. In terms of biological role, catalyzes the epimerization of the S- and R-forms of NAD(P)HX, a damaged form of NAD(P)H that is a result of enzymatic or heat-dependent hydration. This is a prerequisite for the S-specific NAD(P)H-hydrate dehydratase to allow the repair of both epimers of NAD(P)HX. In Cryptococcus neoformans var. neoformans serotype D (strain JEC21 / ATCC MYA-565) (Filobasidiella neoformans), this protein is NAD(P)H-hydrate epimerase.